Here is a 68-residue protein sequence, read N- to C-terminus: Cytochrome c3 (68 aa).

12 residues coordinate heme: His17, His20, Cys26, Cys29, His30, His45, Cys49, Cys52, His53, Cys62, Cys65, and His66.

In terms of processing, binds 3 heme groups per subunit.

Functionally, participates in sulfate respiration coupled with phosphorylation by transferring electrons from the enzyme dehydrogenase to ferredoxin. This is Cytochrome c3 (cyd) from Desulfuromonas acetoxidans (Chloropseudomonas ethylica).